Reading from the N-terminus, the 167-residue chain is MAMSPAVRNSVIAAISGGAIAIASVLITGPGGNDGLEGVRYKPYKDVVGVLTVCYGHTGKDIMPGKTYTEAECKALLNKDLATVARQINPYIKVDIPETTRGGIYSFVYNVGAGNFETSTLLRKINQVDIKGACDQLRRWTYAGGKQWKGLMTRREIEREVCLWGQQ.

A helical; Signal-anchor for type II membrane protein transmembrane segment spans residues 11 to 31 (VIAAISGGAIAIASVLITGPG). Active-site proton donor/acceptor residues include Glu37 and Asp46.

The protein belongs to the glycosyl hydrolase 24 family.

Its subcellular location is the host cell inner membrane. It carries out the reaction Hydrolysis of (1-&gt;4)-beta-linkages between N-acetylmuramic acid and N-acetyl-D-glucosamine residues in a peptidoglycan and between N-acetyl-D-glucosamine residues in chitodextrins.. Signal-arrest-release (SAR) endolysin with lysozyme activity that degrades host peptidoglycans and participates with the pinholin and spanin proteins in the sequential events which lead to programmed host cell lysis releasing the mature viral particles. Once the pinholin has permeabilized the host cell membrane, the SAR-endolysin is released into the periplasm where it breaks down the peptidoglycan layer. This is SAR-endolysin (19) from Bacteriophage PS34.